Here is a 432-residue protein sequence, read N- to C-terminus: MTQTDSLPGVQATVQDMGERARRAARVLRSLPTGRKVQALRALAAELRAREAGILAANAQDVQAAEAAGLPAPLVDRLRLSAGALAAIARDVEAVAALPDPVGEQTDEKTLPSGIRVSQRRVPLGVLGVIYESRPNVTVDVAALALMSGNAAILRGGKETVNSNAALEDAIHAALNREGLPADAVQVIRDPDRARMLELLRLDESVDAIIPRGGAGLHRFCVENATVPVIVGGIGVVHIYLDGSFVQTPQDVQIAAALIRNAKTQKPSACNALDTLLIDRAALAALPDVVRPLLESGVEVRADAEAQAALAGAGLNVTSAQLGDYGTEFLALVASLRTVSGLDEALDFIAERGGHTDVILTRDPAQAERFVQDVDSAAVMVNVSPRFNDGGQLGLGAEVAISTQKLHARGPMGLRELTTSKWVVRGEGQVRD.

This sequence belongs to the gamma-glutamyl phosphate reductase family.

It localises to the cytoplasm. The enzyme catalyses L-glutamate 5-semialdehyde + phosphate + NADP(+) = L-glutamyl 5-phosphate + NADPH + H(+). Its pathway is amino-acid biosynthesis; L-proline biosynthesis; L-glutamate 5-semialdehyde from L-glutamate: step 2/2. Its function is as follows. Catalyzes the NADPH-dependent reduction of L-glutamate 5-phosphate into L-glutamate 5-semialdehyde and phosphate. The product spontaneously undergoes cyclization to form 1-pyrroline-5-carboxylate. This is Gamma-glutamyl phosphate reductase from Deinococcus radiodurans (strain ATCC 13939 / DSM 20539 / JCM 16871 / CCUG 27074 / LMG 4051 / NBRC 15346 / NCIMB 9279 / VKM B-1422 / R1).